The chain runs to 389 residues: Mannuronan synthase (389 aa).

The region spanning 16 to 116 is the PilZ domain; that stretch reads QRQFARVKLP…EVAALRYLIT (101 aa).

Belongs to the Alg44 family.

The protein resides in the periplasm. It carries out the reaction [(1-&gt;4)-beta-D-mannuronosyl](n) + GDP-alpha-D-mannuronate = [(1-&gt;4)-beta-D-mannuronosyl](n+1) + GDP + H(+). It participates in glycan biosynthesis; alginate biosynthesis. Its function is as follows. Required for alginate biosynthesis. The sequence is that of Mannuronan synthase (alg44) from Pseudomonas aeruginosa (strain ATCC 15692 / DSM 22644 / CIP 104116 / JCM 14847 / LMG 12228 / 1C / PRS 101 / PAO1).